The sequence spans 553 residues: Putative transport protein PM1071 (553 aa).

A run of 5 helical transmembrane segments spans residues I4–W24, G28–N48, F65–S85, L91–I111, and M157–I177. RCK C-terminal domains are found at residues K190–E276 and E277–N361. Transmembrane regions (helical) follow at residues M371 to I391, A403 to F425, I439 to V459, L464 to V484, L496 to I516, and L533 to L553.

This sequence belongs to the AAE transporter (TC 2.A.81) family. YidE subfamily.

The protein localises to the cell membrane. The polypeptide is Putative transport protein PM1071 (Pasteurella multocida (strain Pm70)).